The chain runs to 294 residues: MPSSREIRNKIKSVKNTQKITRAMEMVAASKMRKAQDRMKKARPYGEKIRNVAAHMSNASVEYRHPFLISRDSVKRVGIIVVTSDKGLCGGLNTNVLRRALNEIRTWETEGNHVDACCIGNKGLGFMSRLGTQVISQVTGLGDAPNMERLIGAVKVVLDAYTEGQLDRVYIFYNRFINTMKQMPVMEQLLPLTDDRISSEDGEARPTRAPWDYIYEPEAKPVIDDIMVRYIEALVYQAVAENMASEQSARMVAMKAASDNAGNLIDELTLIYNKSRQAAITKELSEIVGGAAAV.

The protein belongs to the ATPase gamma chain family. In terms of assembly, F-type ATPases have 2 components, CF(1) - the catalytic core - and CF(0) - the membrane proton channel. CF(1) has five subunits: alpha(3), beta(3), gamma(1), delta(1), epsilon(1). CF(0) has three main subunits: a, b and c.

The protein localises to the cell inner membrane. Functionally, produces ATP from ADP in the presence of a proton gradient across the membrane. The gamma chain is believed to be important in regulating ATPase activity and the flow of protons through the CF(0) complex. The sequence is that of ATP synthase gamma chain from Nitrosomonas europaea (strain ATCC 19718 / CIP 103999 / KCTC 2705 / NBRC 14298).